We begin with the raw amino-acid sequence, 77 residues long: Acyl carrier protein (77 aa).

The Carrier domain occupies Ala-2 to Leu-77. The residue at position 37 (Ser-37) is an O-(pantetheine 4'-phosphoryl)serine.

It belongs to the acyl carrier protein (ACP) family. In terms of processing, 4'-phosphopantetheine is transferred from CoA to a specific serine of apo-ACP by AcpS. This modification is essential for activity because fatty acids are bound in thioester linkage to the sulfhydryl of the prosthetic group.

It is found in the cytoplasm. The protein operates within lipid metabolism; fatty acid biosynthesis. Its function is as follows. Carrier of the growing fatty acid chain in fatty acid biosynthesis. The protein is Acyl carrier protein of Geobacillus kaustophilus (strain HTA426).